We begin with the raw amino-acid sequence, 115 residues long: Nucleoid-associated protein PMN2A_1347 (115 aa).

The interval 89–115 (STSTMKERMEDLTGGFKLNLPGMGEEN) is disordered.

It belongs to the YbaB/EbfC family. As to quaternary structure, homodimer.

It localises to the cytoplasm. The protein localises to the nucleoid. Functionally, binds to DNA and alters its conformation. May be involved in regulation of gene expression, nucleoid organization and DNA protection. The sequence is that of Nucleoid-associated protein PMN2A_1347 from Prochlorococcus marinus (strain NATL2A).